A 684-amino-acid polypeptide reads, in one-letter code: Cleavage and polyadenylation specificity factor subunit 3 (684 aa).

Ser-2 bears the N-acetylserine mark. Zn(2+) contacts are provided by His-71, His-73, Asp-75, His-76, His-158, and Asp-179. His-396 serves as the catalytic Proton donor. Residue His-418 coordinates Zn(2+). Glycyl lysine isopeptide (Lys-Gly) (interchain with G-Cter in SUMO) cross-links involve residues Lys-462, Lys-465, and Lys-545. Ser-659 carries the phosphoserine modification. At Thr-681 the chain carries Phosphothreonine.

It belongs to the metallo-beta-lactamase superfamily. RNA-metabolizing metallo-beta-lactamase-like family. CPSF3 subfamily. In terms of assembly, component of the cleavage and polyadenylation specificity factor (CPSF) complex, composed of CPSF1, CPSF2, CPSF3, CPSF4 and FIP1L1. Interacts with CPSF2, CSTF2 and SYMPK. Interacts with TUT1; the interaction is direct and mediates the recruitment of the CPSF complex on the 3'UTR of pre-mRNAs. Interacts with WDR33. Interacts with ZC3H3. Interacts with ISY1; this interaction is in an RNA independent manner. Interacts with the microprocessor complex subunits DGCR8 and DROSHA; this interaction is in an RNA dependent manner. Zn(2+) is required as a cofactor. Post-translationally, sumoylated on Lys-462, Lys-465 and Lys-545, preferentially by SUMO3.

The protein localises to the nucleus. Component of the cleavage and polyadenylation specificity factor (CPSF) complex that plays a key role in pre-mRNA 3'-end formation, recognizing the AAUAAA signal sequence and interacting with poly(A) polymerase and other factors to bring about cleavage and poly(A) addition. Has endonuclease activity, and functions as an mRNA 3'-end-processing endonuclease. Also involved in the histone 3'-end pre-mRNA processing. U7 snRNP-dependent protein that induces both the 3' endoribonucleolytic cleavage of histone pre-mRNAs and acts as a 5' to 3' exonuclease for degrading the subsequent downstream cleavage product (DCP) of mature histone mRNAs. Cleavage occurs after the 5'-ACCCA-3' sequence in the histone pre-mRNA leaving a 3'hydroxyl group on the upstream fragment containing the stem loop (SL) and 5' phosphate on the downstream cleavage product (DCP) starting with CU nucleotides. The U7-dependent 5' to 3' exonuclease activity is processive and degrades the DCP RNA substrate even after complete removal of the U7-binding site. Binds to the downstream cleavage product (DCP) of histone pre-mRNAs and the cleaved DCP RNA substrate in a U7 snRNP dependent manner. Required for the selective processing of microRNAs (miRNAs) during embryonic stem cell differentiation via its interaction with ISY1. Required for entering/progressing through S-phase of the cell cycle. Required for the biogenesis of all miRNAs from the pri-miR-17-92 primary transcript except miR-92a. Only required for the biogenesis of miR-290 and miR-96 from the pri-miR-290-295 and pri-miR-96-183 primary transcripts, respectively. This Mus musculus (Mouse) protein is Cleavage and polyadenylation specificity factor subunit 3 (Cpsf3).